The primary structure comprises 90 residues: Antitoxin epsilon (90 aa).

The protein belongs to the epsilon antitoxin family. In the presence of the zeta toxin, forms an inactive PezA(2)PezT(2) heterotetramer. The heterotetramer is still able to bind the zeta toxin substrate UNAG.

In terms of biological role, antitoxin component of a type II toxin-antitoxin (TA) system. Neutralizes the toxic effect of cognate zeta toxin. Part of a postsegregational killing (PSK) system involved in the killing of plasmid-free cells. Continuous synthesis of the epsilon antitoxin is required to counteract the zeta toxin. This chain is Antitoxin epsilon, found in Streptococcus pyogenes.